We begin with the raw amino-acid sequence, 966 residues long: Protein STICHEL-like 4 (966 aa).

Disordered regions lie at residues 64–118 (RSLR…DRSS) and 200–237 (RDNA…REQN). Basic and acidic residues predominate over residues 75 to 84 (LKEDHQDSRE). Polar residues predominate over residues 98-108 (PIVSFGTSKVT). Over residues 109-118 (PSDEKFDRSS) the composition is skewed to basic and acidic residues. Positions 208–217 (SEMSIASNSV) are enriched in polar residues. Residues 219–236 (RGEKYEGEEGGGGRDREQ) are compositionally biased toward basic and acidic residues. ATP is bound at residue 384 to 391 (GPNGTGKT). Zn(2+) contacts are provided by Cys403, Cys412, Cys415, and Cys418. Positions 650–678 (SKEDMEKLKQALKTLSESEKQLRVSNDKL) form a coiled coil. Positions 706–717 (FNHTPLTDSDPS) are enriched in polar residues. Residues 706 to 733 (FNHTPLTDSDPSNHVVAGTRRDDSKQGF) are disordered.

This sequence belongs to the DnaX/STICHEL family.

In Arabidopsis thaliana (Mouse-ear cress), this protein is Protein STICHEL-like 4.